Consider the following 329-residue polypeptide: Ketol-acid reductoisomerase (NADP(+)) (329 aa).

Positions 2-182 (TQLFYDTDAD…GGTRAGILET (181 aa)) constitute a KARI N-terminal Rossmann domain. NADP(+) is bound by residues 25–28 (YGSQ), serine 51, serine 53, and 83–86 (DEFQ). The active site involves histidine 108. Glycine 134 serves as a coordination point for NADP(+). The 146-residue stretch at 183–328 (NFKEETETDL…KGLRSMFSWL (146 aa)) folds into the KARI C-terminal knotted domain. Positions 191, 195, 227, and 231 each coordinate Mg(2+). A substrate-binding site is contributed by serine 252.

The protein belongs to the ketol-acid reductoisomerase family. Mg(2+) is required as a cofactor.

It carries out the reaction (2R)-2,3-dihydroxy-3-methylbutanoate + NADP(+) = (2S)-2-acetolactate + NADPH + H(+). It catalyses the reaction (2R,3R)-2,3-dihydroxy-3-methylpentanoate + NADP(+) = (S)-2-ethyl-2-hydroxy-3-oxobutanoate + NADPH + H(+). It participates in amino-acid biosynthesis; L-isoleucine biosynthesis; L-isoleucine from 2-oxobutanoate: step 2/4. It functions in the pathway amino-acid biosynthesis; L-valine biosynthesis; L-valine from pyruvate: step 2/4. Its function is as follows. Involved in the biosynthesis of branched-chain amino acids (BCAA). Catalyzes an alkyl-migration followed by a ketol-acid reduction of (S)-2-acetolactate (S2AL) to yield (R)-2,3-dihydroxy-isovalerate. In the isomerase reaction, S2AL is rearranged via a Mg-dependent methyl migration to produce 3-hydroxy-3-methyl-2-ketobutyrate (HMKB). In the reductase reaction, this 2-ketoacid undergoes a metal-dependent reduction by NADPH to yield (R)-2,3-dihydroxy-isovalerate. This is Ketol-acid reductoisomerase (NADP(+)) from Prochlorococcus marinus (strain MIT 9312).